The following is a 182-amino-acid chain: uncharacterized protein (182 aa).

Its subcellular location is the plastid. It is found in the cyanelle. This is an uncharacterized protein from Cyanophora paradoxa.